Reading from the N-terminus, the 78-residue chain is Probable [Fe-S]-dependent transcriptional repressor (78 aa).

Positions 56, 61, 64, and 70 each coordinate iron-sulfur cluster.

The protein belongs to the FeoC family.

In terms of biological role, may function as a transcriptional regulator that controls feoABC expression. The polypeptide is Probable [Fe-S]-dependent transcriptional repressor (Cronobacter sakazakii (strain ATCC BAA-894) (Enterobacter sakazakii)).